Here is a 595-residue protein sequence, read N- to C-terminus: Aspartate--tRNA(Asp/Asn) ligase (595 aa).

An L-aspartate-binding site is contributed by Glu-174. The tract at residues 198 to 201 (QLFK) is aspartate. Arg-220 is a binding site for L-aspartate. ATP contacts are provided by residues 220 to 222 (RDE) and Gln-229. An L-aspartate-binding site is contributed by His-452. ATP is bound at residue Glu-486. Arg-493 serves as a coordination point for L-aspartate. 538–541 (GLDR) contacts ATP.

It belongs to the class-II aminoacyl-tRNA synthetase family. Type 1 subfamily. In terms of assembly, homodimer.

It localises to the cytoplasm. It catalyses the reaction tRNA(Asx) + L-aspartate + ATP = L-aspartyl-tRNA(Asx) + AMP + diphosphate. Its function is as follows. Aspartyl-tRNA synthetase with relaxed tRNA specificity since it is able to aspartylate not only its cognate tRNA(Asp) but also tRNA(Asn). Reaction proceeds in two steps: L-aspartate is first activated by ATP to form Asp-AMP and then transferred to the acceptor end of tRNA(Asp/Asn). This chain is Aspartate--tRNA(Asp/Asn) ligase, found in Nitrosococcus oceani (strain ATCC 19707 / BCRC 17464 / JCM 30415 / NCIMB 11848 / C-107).